Here is a 363-residue protein sequence, read N- to C-terminus: MTKRILMLEDGNYFIGDAIGSEKETIGEVVFNTGMTGYQETITDPSYYGQIITFTYPLVGNYGVNRDDFESINPAVKGVVVREAAEFPSNWRNQITLDEFLKEKGIPGIAGIDTRKLTKLIRKEGTLKGILAAETANKEELLHHLRSVRLPVDQVHEVSSAKAFASPGDGKRVVLVDYGVKSSILRELNKRNCYVTVVPYNTTAEEILAMHPDGVMLSNGPGDPKDVPEALEMIRGIQGKLPLFGICLGHQLFALANGADTFKLKFGHRGANHPVKELATGRVDFTAQNHGYAVEKDSLIGTDLKVTHIELNDETVEGLAHKEYPAYTVQYHPEANPGPSDVNYLFDEFMEMMNGKEEGELHA.

The CPSase stretch occupies residues 1 to 172 (MTKRILMLED…AFASPGDGKR (172 aa)). Positions 46, 220, and 222 each coordinate L-glutamine. One can recognise a Glutamine amidotransferase type-1 domain in the interval 172-359 (RVVLVDYGVK…MEMMNGKEEG (188 aa)). Residue cysteine 247 is the Nucleophile of the active site. The L-glutamine site is built by leucine 248, glutamine 251, asparagine 289, glycine 291, and tyrosine 292. Catalysis depends on residues histidine 332 and glutamate 334.

This sequence belongs to the CarA family. Composed of two chains; the small (or glutamine) chain promotes the hydrolysis of glutamine to ammonia, which is used by the large (or ammonia) chain to synthesize carbamoyl phosphate. Tetramer of heterodimers (alpha,beta)4.

The enzyme catalyses hydrogencarbonate + L-glutamine + 2 ATP + H2O = carbamoyl phosphate + L-glutamate + 2 ADP + phosphate + 2 H(+). It catalyses the reaction L-glutamine + H2O = L-glutamate + NH4(+). The protein operates within amino-acid biosynthesis; L-arginine biosynthesis; carbamoyl phosphate from bicarbonate: step 1/1. It participates in pyrimidine metabolism; UMP biosynthesis via de novo pathway; (S)-dihydroorotate from bicarbonate: step 1/3. In terms of biological role, small subunit of the glutamine-dependent carbamoyl phosphate synthetase (CPSase). CPSase catalyzes the formation of carbamoyl phosphate from the ammonia moiety of glutamine, carbonate, and phosphate donated by ATP, constituting the first step of 2 biosynthetic pathways, one leading to arginine and/or urea and the other to pyrimidine nucleotides. The small subunit (glutamine amidotransferase) binds and cleaves glutamine to supply the large subunit with the substrate ammonia. This chain is Carbamoyl phosphate synthase small chain, found in Listeria monocytogenes serotype 4b (strain F2365).